The chain runs to 152 residues: ATP synthase epsilon chain 2 (152 aa).

This sequence belongs to the ATPase epsilon chain family. F-type ATPases have 2 components, CF(1) - the catalytic core - and CF(0) - the membrane proton channel. CF(1) has five subunits: alpha(3), beta(3), gamma(1), delta(1), epsilon(1). CF(0) has three main subunits: a, b and c.

The protein resides in the cell inner membrane. Functionally, produces ATP from ADP in the presence of a proton gradient across the membrane. This is ATP synthase epsilon chain 2 from Burkholderia orbicola (strain AU 1054).